Reading from the N-terminus, the 63-residue chain is Large ribosomal subunit protein uL30 (63 aa).

The protein belongs to the universal ribosomal protein uL30 family. In terms of assembly, part of the 50S ribosomal subunit.

This Caulobacter sp. (strain K31) protein is Large ribosomal subunit protein uL30.